Consider the following 527-residue polypeptide: Inosine-5'-monophosphate dehydrogenase (527 aa).

CBS domains follow at residues 121–183 (FILD…VTAV) and 184–240 (MSTD…PLAS). NAD(+) is bound by residues 277–279 (DSS) and 327–329 (GMG). Gly-329 and Gly-331 together coordinate K(+). Ser-332 serves as a coordination point for IMP. Position 334 (Cys-334) interacts with K(+). The Thioimidate intermediate role is filled by Cys-334. Residues 367-369 (DGG) and 390-391 (GS) contribute to the IMP site. The active-site Proton acceptor is Arg-440. Position 452 (Gln-452) interacts with IMP. The tract at residues 506 to 527 (ASAQTEGNVHGLHSHEKKLYSS) is disordered. K(+) contacts are provided by Glu-511 and Gly-512. A compositionally biased stretch (basic and acidic residues) spans 518 to 527 (HSHEKKLYSS).

This sequence belongs to the IMPDH/GMPR family. In terms of assembly, homotetramer. The cofactor is K(+).

Its subcellular location is the cytoplasm. The catalysed reaction is IMP + NAD(+) + H2O = XMP + NADH + H(+). It participates in purine metabolism; XMP biosynthesis via de novo pathway; XMP from IMP: step 1/1. Mycophenolic acid (MPA) is a non-competitive inhibitor that prevents formation of the closed enzyme conformation by binding to the same site as the amobile flap. In contrast, mizoribine monophosphate (MZP) is a competitive inhibitor that induces the closed conformation. MPA is a potent inhibitor of mammalian IMPDHs but a poor inhibitor of the bacterial enzymes. MZP is a more potent inhibitor of bacterial IMPDH. Catalyzes the conversion of inosine 5'-phosphate (IMP) to xanthosine 5'-phosphate (XMP), the first committed and rate-limiting step in the de novo synthesis of guanine nucleotides, and therefore plays an important role in the regulation of cell growth. Part of the gene cluster that mediates the biosynthesis of mycophenolic acid (MPA), the first isolated antibiotic natural product in the world. Does not play a role in the biosynthesis of MPA, but is involved in self resistance to MPA, since MPA acts as an inhibitor of IMP dehydrogenases. This chain is Inosine-5'-monophosphate dehydrogenase, found in Penicillium brevicompactum.